Consider the following 410-residue polypeptide: Peptidase T (410 aa).

His-79 is a binding site for Zn(2+). Residue Asp-81 is part of the active site. Asp-142 contacts Zn(2+). The Proton acceptor role is filled by Glu-176. Glu-177, Asp-199, and His-381 together coordinate Zn(2+).

It belongs to the peptidase M20B family. The cofactor is Zn(2+).

It is found in the cytoplasm. The enzyme catalyses Release of the N-terminal residue from a tripeptide.. In terms of biological role, cleaves the N-terminal amino acid of tripeptides. The protein is Peptidase T of Brevibacillus brevis (strain 47 / JCM 6285 / NBRC 100599).